A 105-amino-acid chain; its full sequence is MPCSCKQKKATPSDITTDRYITFDGIDCDGNARILMSYIHKHIDDPQKTNKFWDYFRKKAEGGNGPKPDDLFLIHSNLNQIRELFELYEDSEALALLDVVEIECC.

Belongs to the CowN family.

Functionally, is required to sustain N(2)-dependent growth in the presence of low levels of carbon monoxide (CO). Probably acts by protecting the N(2) fixation ability of the nitrogenase complex, which is inactivated in the presence of CO. The protein is N(2)-fixation sustaining protein CowN of Tolumonas auensis (strain DSM 9187 / NBRC 110442 / TA 4).